The chain runs to 744 residues: Catalase-peroxidase (744 aa).

A disordered region spans residues 1–21 (MANESKCPFHQTAGGGTSNRD). The segment at residues 91–241 (WHSAGTYRIG…LAAVQMGLIY (151 aa)) is a cross-link (tryptophyl-tyrosyl-methioninium (Trp-Tyr) (with M-267)). His92 acts as the Proton acceptor in catalysis. Residues 241-267 (YVNPEGPEGNPDPVASGKDIRDTFGRM) constitute a cross-link (tryptophyl-tyrosyl-methioninium (Tyr-Met) (with W-91)). His282 serves as a coordination point for heme b. The interval 361–387 (GAHQWRPKDGKGANTVPDAHDTTKRHA) is disordered.

The protein belongs to the peroxidase family. Peroxidase/catalase subfamily. In terms of assembly, homodimer or homotetramer. Heme b serves as cofactor. Formation of the three residue Trp-Tyr-Met cross-link is important for the catalase, but not the peroxidase activity of the enzyme.

The enzyme catalyses H2O2 + AH2 = A + 2 H2O. It carries out the reaction 2 H2O2 = O2 + 2 H2O. Functionally, bifunctional enzyme with both catalase and broad-spectrum peroxidase activity. In Pseudomonas entomophila (strain L48), this protein is Catalase-peroxidase.